Reading from the N-terminus, the 104-residue chain is MNPVSYINDEQQGDLLLFVYVQPKASRDQIVGLYGNELKIAITAPPIDGKANAYLSKYLAKACKVAKSQVHIIKGEQGRHKQIRISQPQVIPPEIAALLSPFSL.

Belongs to the UPF0235 family.

This is UPF0235 protein Sfri_2863 from Shewanella frigidimarina (strain NCIMB 400).